Consider the following 567-residue polypeptide: Laccase-7 (567 aa).

The signal sequence occupies residues 1-23 (MEGVRVPIACALILLAISSITSA). Plastocyanin-like domains lie at 31 to 147 (NVQN…PKSG) and 157 to 310 (KEVP…YGGA). Residues asparagine 34, asparagine 50, and asparagine 77 are each glycosylated (N-linked (GlcNAc...) asparagine). Cu cation-binding residues include histidine 81 and histidine 83. A glycan (N-linked (GlcNAc...) asparagine) is linked at asparagine 115. Cu cation is bound by residues histidine 126 and histidine 128. N-linked (GlcNAc...) asparagine glycosylation is found at asparagine 186, asparagine 298, asparagine 339, asparagine 374, asparagine 386, asparagine 427, and asparagine 450. The 140-residue stretch at 412–551 (DFPDQPPVKF…GMIFVVKNGP (140 aa)) folds into the Plastocyanin-like 3 domain. The Cu cation site is built by histidine 468, histidine 471, histidine 473, histidine 530, cysteine 531, histidine 532, and histidine 536.

This sequence belongs to the multicopper oxidase family. Requires Cu cation as cofactor. Predominantly expressed in tissues other than the inflorescence stem.

It localises to the secreted. The protein resides in the extracellular space. It is found in the apoplast. It carries out the reaction 4 hydroquinone + O2 = 4 benzosemiquinone + 2 H2O. Lignin degradation and detoxification of lignin-derived products. The chain is Laccase-7 (LAC7) from Arabidopsis thaliana (Mouse-ear cress).